A 121-amino-acid polypeptide reads, in one-letter code: Small ribosomal subunit protein uS13 (121 aa).

Residues 95 to 121 (LPMRGQRTRTNARTRKGPRKAAASLKK) are disordered.

This sequence belongs to the universal ribosomal protein uS13 family. Part of the 30S ribosomal subunit. Forms a loose heterodimer with protein S19. Forms two bridges to the 50S subunit in the 70S ribosome.

Located at the top of the head of the 30S subunit, it contacts several helices of the 16S rRNA. In the 70S ribosome it contacts the 23S rRNA (bridge B1a) and protein L5 of the 50S subunit (bridge B1b), connecting the 2 subunits; these bridges are implicated in subunit movement. Contacts the tRNAs in the A and P-sites. This is Small ribosomal subunit protein uS13 from Polaromonas naphthalenivorans (strain CJ2).